The chain runs to 397 residues: Ethanolaminephosphotransferase 1 (397 aa).

Alanine 2 bears the N-acetylalanine mark. A run of 10 helical transmembrane segments spans residues 47 to 69, 84 to 103, 123 to 145, 150 to 172, 179 to 201, 221 to 243, 256 to 278, 291 to 310, 317 to 339, and 344 to 366; these read WLAPNLITFSGFLLVVFNFLLMA, HVPDWVWIVVGILNFVAYTL, LFDHGLDNWSYVYFVVTVYSIFG, GVSVFVLYLLLWVVLFSFILSHW, ILFLPWGYDISQVTISFVYIVTA, LFTAMIIGCALCVTLPMSLLNFF, VYEAMVPLFSPCLLFILSTAWIL, VFYFMVGTAFANSTCQLIVC, CPTLNWLLVPLFLVVLVVNLGVA, and SILLYTLTTAFTLAHIHYGVRVV. Selenocysteine 387 is a non-standard amino acid (selenocysteine).

It belongs to the CDP-alcohol phosphatidyltransferase class-I family. The cofactor is Mg(2+). Mn(2+) is required as a cofactor.

Its subcellular location is the endoplasmic reticulum membrane. The catalysed reaction is CDP-ethanolamine + a 1,2-diacyl-sn-glycerol = a 1,2-diacyl-sn-glycero-3-phosphoethanolamine + CMP + H(+). The enzyme catalyses 1-O-alkyl-2-acyl-sn-glycerol + CDP-ethanolamine = a 1-O-alkyl-2-acyl-sn-glycero-3-phosphoethanolamine + CMP + H(+). It functions in the pathway phospholipid metabolism; phosphatidylethanolamine biosynthesis; phosphatidylethanolamine from ethanolamine: step 3/3. Its function is as follows. Ethanolaminephosphotransferase that catalyzes the transfer of phosphoethanolamine (PE) from CDP-ethanolamine to lipid acceptors, the final step in the synthesis of PE via the 'Kennedy' pathway. PE is the second most abundant phospholipid of membranes in mammals and is involved in various membrane-related cellular processes. The enzyme is critical for the synthesis of several PE species and also catalyzes the synthesis of plasmanyl-PE, a lipid required for proper myelination and neurodevelopment, from 1-alkyl-2-acylglycerol. This chain is Ethanolaminephosphotransferase 1, found in Pongo abelii (Sumatran orangutan).